A 450-amino-acid polypeptide reads, in one-letter code: Sorting nexin-4 (450 aa).

Methionine 1 is subject to N-acetylmethionine. The disordered stretch occupies residues 1–53 (MEQAAPDPERLWQPAPLEPLSHPDAGLESMVGEETKGARDEGPGDGTMTENNF). The span at 33 to 42 (EETKGARDEG) shows a compositional bias: basic and acidic residues. In terms of domain architecture, PX spans 61–187 (SVSEAEKRTG…YLFLTQEGNW (127 aa)). Residues arginine 106, serine 108, lysine 132, and arginine 154 each contribute to the a 1,2-diacyl-sn-glycero-3-phospho-(1D-myo-inositol-3-phosphate) site.

The protein belongs to the sorting nexin family. In terms of assembly, heterodimer; heterodimerizes with SNX7 or SNX30. Interacts with WWC1/KIBRA. Identified in a complex with WWC1/KIBRA and dynein components DYNLL1 and DYNC1I2. Interacts with BIN1.

Its subcellular location is the early endosome. The protein resides in the early endosome membrane. Involved in the regulation of endocytosis and in several stages of intracellular trafficking. Plays a role in recycling endocytosed transferrin receptor and prevent its degradation. Involved in autophagosome assembly by regulating trafficking and recycling of phospholipid scramblase ATG9A. This chain is Sorting nexin-4, found in Bos taurus (Bovine).